The primary structure comprises 231 residues: 7-cyano-7-deazaguanine synthase (231 aa).

8-18 is a binding site for ATP; sequence FSGGQDSTTCL. Zn(2+) contacts are provided by Cys-188, Cys-197, Cys-200, and Cys-203.

This sequence belongs to the QueC family. It depends on Zn(2+) as a cofactor.

It catalyses the reaction 7-carboxy-7-deazaguanine + NH4(+) + ATP = 7-cyano-7-deazaguanine + ADP + phosphate + H2O + H(+). The protein operates within purine metabolism; 7-cyano-7-deazaguanine biosynthesis. Its function is as follows. Catalyzes the ATP-dependent conversion of 7-carboxy-7-deazaguanine (CDG) to 7-cyano-7-deazaguanine (preQ(0)). This Cronobacter sakazakii (strain ATCC BAA-894) (Enterobacter sakazakii) protein is 7-cyano-7-deazaguanine synthase.